A 310-amino-acid chain; its full sequence is Beta-carotene 3-hydroxylase 1, chloroplastic (310 aa).

The transit peptide at M1–V51 directs the protein to the chloroplast. A run of 2 helical transmembrane segments spans residues Y98 to Y118 and M132 to W152. The Fatty acid hydroxylase domain maps to A145–F272. The Histidine box-1 motif lies at H157–H162. The short motif at H169–H173 is the Histidine box-2 element. A run of 2 helical transmembrane segments spans residues N183–F203 and V208–F228. Positions H230–H235 match the Histidine box-3 motif. The Histidine box-4 motif lies at H256–H260.

Belongs to the sterol desaturase family. In terms of assembly, homodimer. In terms of tissue distribution, expressed in leaves, flowers, stems, roots and siliques.

The protein localises to the plastid. Its subcellular location is the chloroplast membrane. The catalysed reaction is all-trans-beta-carotene + 4 reduced [2Fe-2S]-[ferredoxin] + 2 O2 + 4 H(+) = all-trans-zeaxanthin + 4 oxidized [2Fe-2S]-[ferredoxin] + 2 H2O. Its function is as follows. Nonheme diiron monooxygenase involved in the biosynthesis of xanthophylls. Specific for beta-ring hydroxylations of beta-carotene. Also has a low activity toward the beta- and epsilon-rings of alpha-carotene. No activity with acyclic carotenoids such as lycopene and neurosporene. Uses ferredoxin as an electron donor. The protein is Beta-carotene 3-hydroxylase 1, chloroplastic (BETA-OHASE 1) of Arabidopsis thaliana (Mouse-ear cress).